The primary structure comprises 163 residues: ATP synthase subunit b 1 (163 aa).

Residues 7–27 traverse the membrane as a helical segment; it reads AETWVAIAFVILMGIFAYLGV.

The protein belongs to the ATPase B chain family. F-type ATPases have 2 components, F(1) - the catalytic core - and F(0) - the membrane proton channel. F(1) has five subunits: alpha(3), beta(3), gamma(1), delta(1), epsilon(1). F(0) has three main subunits: a(1), b(2) and c(10-14). The alpha and beta chains form an alternating ring which encloses part of the gamma chain. F(1) is attached to F(0) by a central stalk formed by the gamma and epsilon chains, while a peripheral stalk is formed by the delta and b chains.

Its subcellular location is the cell inner membrane. Its function is as follows. F(1)F(0) ATP synthase produces ATP from ADP in the presence of a proton or sodium gradient. F-type ATPases consist of two structural domains, F(1) containing the extramembraneous catalytic core and F(0) containing the membrane proton channel, linked together by a central stalk and a peripheral stalk. During catalysis, ATP synthesis in the catalytic domain of F(1) is coupled via a rotary mechanism of the central stalk subunits to proton translocation. In terms of biological role, component of the F(0) channel, it forms part of the peripheral stalk, linking F(1) to F(0). This is ATP synthase subunit b 1 from Rhodopseudomonas palustris (strain HaA2).